Consider the following 95-residue polypeptide: Co-chaperonin GroES (95 aa).

It belongs to the GroES chaperonin family. Heptamer of 7 subunits arranged in a ring. Interacts with the chaperonin GroEL.

The protein localises to the cytoplasm. Functionally, together with the chaperonin GroEL, plays an essential role in assisting protein folding. The GroEL-GroES system forms a nano-cage that allows encapsulation of the non-native substrate proteins and provides a physical environment optimized to promote and accelerate protein folding. GroES binds to the apical surface of the GroEL ring, thereby capping the opening of the GroEL channel. In Ruegeria pomeroyi (strain ATCC 700808 / DSM 15171 / DSS-3) (Silicibacter pomeroyi), this protein is Co-chaperonin GroES.